The chain runs to 75 residues: Serine rich endogenous peptide 20 (75 aa).

The N-terminal stretch at 1-25 (MYKLTLCILTLSFLLLSGLSNTVLA) is a signal peptide. The SCOOP motif motif lies at 52–66 (KIGASGSNSGRAPSC). Residues 54 to 75 (GASGSNSGRAPSCNNSCKPNRP) are disordered. Residues 56 to 58 (SGS) carry the SxS motif essential for MIK2 binding motif. The span at 56 to 75 (SGSNSGRAPSCNNSCKPNRP) shows a compositional bias: polar residues.

Belongs to the serine rich endogenous peptide (SCOOP) phytocytokine family. Interacts with MIK2 (via extracellular leucine-rich repeat domain); this interaction triggers the formation of complex between MIK2 and the BAK1/SERK3 and SERK4 coreceptors, and subsequent BAK1 activation by phosphorylation. Mostly expressed in roots.

It is found in the cell membrane. The protein localises to the secreted. It localises to the extracellular space. Its subcellular location is the apoplast. Functionally, brassicaceae-specific phytocytokine (plant endogenous peptide released into the apoplast) perceived by MIK2 in a BAK1/SERK3 and SERK4 coreceptors-dependent manner, that modulates various physiological and antimicrobial processes including growth prevention and reactive oxygen species (ROS) response regulation. Inhibits root growth. In Arabidopsis thaliana (Mouse-ear cress), this protein is Serine rich endogenous peptide 20.